Here is a 445-residue protein sequence, read N- to C-terminus: Lateral flagellar hook-associated protein 2 (445 aa).

A coiled-coil region spans residues 388–423; the sequence is SGAFKSRKEALQANLDRLSDKQTTLERKYDMSYKRY.

Belongs to the FliD family. As to quaternary structure, homopentamer.

It is found in the secreted. The protein localises to the bacterial flagellum. Required for the morphogenesis and for the elongation of the flagellar filament by facilitating polymerization of the flagellin monomers at the tip of growing filament. Forms a capping structure, which prevents flagellin subunits (transported through the central channel of the flagellum) from leaking out without polymerization at the distal end. Essential for swarming motility. This is Lateral flagellar hook-associated protein 2 (fliDL) from Vibrio parahaemolyticus serotype O3:K6 (strain RIMD 2210633).